The chain runs to 164 residues: ATP synthase subunit b (164 aa).

Residues G6–I26 traverse the membrane as a helical segment.

This sequence belongs to the ATPase B chain family. In terms of assembly, F-type ATPases have 2 components, F(1) - the catalytic core - and F(0) - the membrane proton channel. F(1) has five subunits: alpha(3), beta(3), gamma(1), delta(1), epsilon(1). F(0) has three main subunits: a(1), b(2) and c(10-14). The alpha and beta chains form an alternating ring which encloses part of the gamma chain. F(1) is attached to F(0) by a central stalk formed by the gamma and epsilon chains, while a peripheral stalk is formed by the delta and b chains.

The protein resides in the cell membrane. Its function is as follows. F(1)F(0) ATP synthase produces ATP from ADP in the presence of a proton or sodium gradient. F-type ATPases consist of two structural domains, F(1) containing the extramembraneous catalytic core and F(0) containing the membrane proton channel, linked together by a central stalk and a peripheral stalk. During catalysis, ATP synthesis in the catalytic domain of F(1) is coupled via a rotary mechanism of the central stalk subunits to proton translocation. Functionally, component of the F(0) channel, it forms part of the peripheral stalk, linking F(1) to F(0). The chain is ATP synthase subunit b from Streptococcus pneumoniae serotype 2 (strain D39 / NCTC 7466).